A 514-amino-acid polypeptide reads, in one-letter code: 2,3-bisphosphoglycerate-independent phosphoglycerate mutase (514 aa).

Mn(2+)-binding residues include aspartate 14 and serine 64. The active-site Phosphoserine intermediate is serine 64. Substrate is bound by residues histidine 125, 155 to 156 (RD), arginine 187, arginine 193, 263 to 266 (RADR), and lysine 336. Residues aspartate 403, histidine 407, aspartate 444, histidine 445, and histidine 463 each contribute to the Mn(2+) site.

This sequence belongs to the BPG-independent phosphoglycerate mutase family. Monomer. It depends on Mn(2+) as a cofactor.

It catalyses the reaction (2R)-2-phosphoglycerate = (2R)-3-phosphoglycerate. Its pathway is carbohydrate degradation; glycolysis; pyruvate from D-glyceraldehyde 3-phosphate: step 3/5. Catalyzes the interconversion of 2-phosphoglycerate and 3-phosphoglycerate. The protein is 2,3-bisphosphoglycerate-independent phosphoglycerate mutase of Shewanella sediminis (strain HAW-EB3).